A 382-amino-acid chain; its full sequence is Neuropeptide Y receptor type 2 (382 aa).

The interval 1–39 (MGPIGAEADENQTVEEMKMEPSGPGHTTPRGELAPDSEP) is disordered. At 1 to 46 (MGPIGAEADENQTVEEMKMEPSGPGHTTPRGELAPDSEPELKDSTK) the chain is on the extracellular side. An N-linked (GlcNAc...) asparagine glycan is attached at asparagine 11. The chain crosses the membrane as a helical span at residues 47 to 67 (LIEVQIILILAYCSIILLGVV). Topologically, residues 68 to 87 (GNSLVIHVVIKFKSMRTVTN) are cytoplasmic. Residues 88 to 108 (FFIANLAVADLLVNTLCLPFT) traverse the membrane as a helical segment. At 109 to 125 (LTYTLMGEWKMGPVLCH) the chain is on the extracellular side. A disulfide bond links cysteine 124 and cysteine 204. A helical transmembrane segment spans residues 126-146 (LVPYAQGLAVQVSTITLTVIA). The Cytoplasmic segment spans residues 147 to 166 (LDRHRCIVYHLESKISKRIS). The chain crosses the membrane as a helical span at residues 167–187 (FLIIGLAWGISALLASPLAIF). The Extracellular segment spans residues 188–217 (REYSLIEIIPDFEIVACTEKWPGEEKSIYG). The helical transmembrane segment at 218–238 (TVYSLSSLLILYVLPLGIISF) threads the bilayer. Topologically, residues 239–269 (SYARIWSKLKNHVSPGGVNDHYHQRRQKTTK) are cytoplasmic. A helical transmembrane segment spans residues 270 to 290 (MLVCVVVVFAVSWLPLHAFQL). The Extracellular segment spans residues 291-305 (AVDIDSQVLDLKEYK). The chain crosses the membrane as a helical span at residues 306–326 (LIFTVFHIIAMCSTFANPLLY). Residues 327 to 382 (GWMNSNYRKAFLSAFRCEQRLDAIHSEVSMTSKAKKNLEATKNGGPDDSFTEATNV) lie on the Cytoplasmic side of the membrane. A lipid anchor (S-palmitoyl cysteine) is attached at cysteine 343. A disordered region spans residues 363–382 (NLEATKNGGPDDSFTEATNV).

The protein belongs to the G-protein coupled receptor 1 family.

Its subcellular location is the cell membrane. Its function is as follows. Receptor for neuropeptide Y and peptide YY. The polypeptide is Neuropeptide Y receptor type 2 (NPY2R) (Sus scrofa (Pig)).